The sequence spans 311 residues: MTFSHRPVMPAEVLEYLSPRPGGVYVDGTLGGAGHARLILEATSPDGMLIGFDRDPAALEVARERLALFGERFRPVPGNFSEMGRVLAELGVDGVDGFLLDVGVSSHQLDTAERGFSFLTDAPLDMRMNTLVPGTAADLVNDLNEHELARIIKEYGEERWARRIASFIVKARVDGPIERTLQLVDIIKGAIPRGAWEERIHPATRTFQALRIAVNDELGSLERGLESALGLLRPGGRGVVISFHSLEDRIVKTMFRRYAQGCTCPKELPRCVCGGVPRLRILTGRPVVAGDVEVAENPRARSAKLRAAEKL.

S-adenosyl-L-methionine contacts are provided by residues 33 to 35 (AGH), aspartate 53, phenylalanine 80, aspartate 101, and glutamine 108.

Belongs to the methyltransferase superfamily. RsmH family.

The protein resides in the cytoplasm. It catalyses the reaction cytidine(1402) in 16S rRNA + S-adenosyl-L-methionine = N(4)-methylcytidine(1402) in 16S rRNA + S-adenosyl-L-homocysteine + H(+). Its function is as follows. Specifically methylates the N4 position of cytidine in position 1402 (C1402) of 16S rRNA. In Geobacter sulfurreducens (strain ATCC 51573 / DSM 12127 / PCA), this protein is Ribosomal RNA small subunit methyltransferase H.